Reading from the N-terminus, the 154-residue chain is Large ribosomal subunit protein uL15 (154 aa).

The segment at 1–57 is disordered; sequence MRFQDLHPQAGSRRRKRRIGRGIAAGQGASGGFGMRGQKSRSGRPTRPGFEGGQNPL. Gly residues predominate over residues 23-35; it reads IAAGQGASGGFGM.

Belongs to the universal ribosomal protein uL15 family. As to quaternary structure, part of the 50S ribosomal subunit.

Its function is as follows. Binds to the 23S rRNA. The sequence is that of Large ribosomal subunit protein uL15 from Thermosynechococcus vestitus (strain NIES-2133 / IAM M-273 / BP-1).